A 128-amino-acid chain; its full sequence is Pi-hexatoxin-Hi1c (128 aa).

The first 19 residues, 1 to 19, serve as a signal peptide directing secretion; it reads MKLRITLALTSVLAFCVFG. A propeptide spanning residues 20-47 is cleaved from the precursor; it reads DKENENLMENLLEDDLLDIFTDAIHMER. 6 cysteine pairs are disulfide-bonded: Cys-54/Cys-69, Cys-61/Cys-74, Cys-68/Cys-84, Cys-93/Cys-108, Cys-100/Cys-113, and Cys-107/Cys-124. 2 Domain repeats span residues 54–84 and 93–124; these read CIAK…HEVC and CLEK…HPVC. Residues 54–124 form a 2 X approximate repeats with cysteine pattern C-C-CC-C-C region; it reads CIAKWKSCAG…ERRGNKHPVC (71 aa).

This sequence belongs to the psalmotoxin-1 family. Double-knot toxin subfamily. Expressed by the venom gland.

It localises to the secreted. This toxin potently and selectively inhibits ASIC1a, an isoform of the gene ASIC1. It incompletely inhibits ASIC1a activation in a pH-independent and slowly reversible manner. This toxin acts by binding to and stabilizing the closed state of the channel, thereby impeding the transition into a conducting state. This toxin may bind to the acidic pocket of ASIC1a, since mutation of a key residue of this pocket (Arg-350) abolishes the ability of the toxin to inhibit ASIC1a. In vivo, this toxin protects the brain from neuronal injury when administered up to 8 hours after stroke onset. This Hadronyche infensa (Fraser island funnel-web spider) protein is Pi-hexatoxin-Hi1c.